The primary structure comprises 108 residues: MLKGNLAGLMKQAQQMQENMKKMQEQLALIEVEGQSGAGLVKVTMTCRNEVRRVSIDPSLLADDKDMLEDLVAAAFNDAVRKAEATSQEKMSGMTSGLPLPPGFKLPF.

Positions 85 to 95 (ATSQEKMSGMT) are enriched in polar residues. The tract at residues 85–108 (ATSQEKMSGMTSGLPLPPGFKLPF) is disordered. Pro residues predominate over residues 99–108 (PLPPGFKLPF).

It belongs to the YbaB/EbfC family. Homodimer.

The protein resides in the cytoplasm. It is found in the nucleoid. Binds to DNA and alters its conformation. May be involved in regulation of gene expression, nucleoid organization and DNA protection. The polypeptide is Nucleoid-associated protein Bcen_6253 (Burkholderia orbicola (strain AU 1054)).